We begin with the raw amino-acid sequence, 345 residues long: tRNA pseudouridine synthase B (345 aa).

Residue D39 is the Nucleophile of the active site.

It belongs to the pseudouridine synthase TruB family. Type 1 subfamily.

It carries out the reaction uridine(55) in tRNA = pseudouridine(55) in tRNA. Its function is as follows. Responsible for synthesis of pseudouridine from uracil-55 in the psi GC loop of transfer RNAs. The protein is tRNA pseudouridine synthase B of Rickettsia rickettsii (strain Iowa).